Consider the following 377-residue polypeptide: S-adenosylmethionine decarboxylase proenzyme 2 (377 aa).

Catalysis depends on residues Glu24 and Glu27. Ser84 serves as the catalytic Schiff-base intermediate with substrate; via pyruvic acid. Position 84 is a pyruvic acid (Ser); by autocatalysis (Ser84). Cys98 (proton donor; for catalytic activity) is an active-site residue. Residues Ser246 and His259 each act as proton acceptor; for processing activity in the active site.

This sequence belongs to the eukaryotic AdoMetDC family. Requires pyruvate as cofactor. Post-translationally, is synthesized initially as an inactive proenzyme. Formation of the active enzyme involves a self-maturation process in which the active site pyruvoyl group is generated from an internal serine residue via an autocatalytic post-translational modification. Two non-identical subunits are generated from the proenzyme in this reaction, and the pyruvate is formed at the N-terminus of the alpha chain, which is derived from the carboxyl end of the proenzyme. The post-translation cleavage follows an unusual pathway, termed non-hydrolytic serinolysis, in which the side chain hydroxyl group of the serine supplies its oxygen atom to form the C-terminus of the beta chain, while the remainder of the serine residue undergoes an oxidative deamination to produce ammonia and the pyruvoyl group blocking the N-terminus of the alpha chain.

The enzyme catalyses S-adenosyl-L-methionine + H(+) = S-adenosyl 3-(methylsulfanyl)propylamine + CO2. It participates in amine and polyamine biosynthesis; S-adenosylmethioninamine biosynthesis; S-adenosylmethioninamine from S-adenosyl-L-methionine: step 1/1. The protein is S-adenosylmethionine decarboxylase proenzyme 2 (SAMDC2) of Dianthus caryophyllus (Carnation).